The following is a 551-amino-acid chain: Methionine--tRNA ligase (551 aa).

Residues 12 to 22 (PYANGPLHFGH) carry the 'HIGH' region motif. Positions 144, 147, 157, and 160 each coordinate Zn(2+). Residues 330 to 334 (QFSKS) carry the 'KMSKS' region motif. Residue K333 coordinates ATP.

The protein belongs to the class-I aminoacyl-tRNA synthetase family. MetG type 1 subfamily. In terms of assembly, monomer. Zn(2+) is required as a cofactor.

The protein resides in the cytoplasm. The enzyme catalyses tRNA(Met) + L-methionine + ATP = L-methionyl-tRNA(Met) + AMP + diphosphate. Functionally, is required not only for elongation of protein synthesis but also for the initiation of all mRNA translation through initiator tRNA(fMet) aminoacylation. The protein is Methionine--tRNA ligase (metG) of Chlamydia pneumoniae (Chlamydophila pneumoniae).